A 199-amino-acid chain; its full sequence is Twist-related protein (199 aa).

Residues 1 to 43 form a disordered region; sequence MQEHQLSRVTSGNKKKYQSFDDESRDEKRMKCDSTDKLESNSN. Over residues 25 to 39 the composition is skewed to basic and acidic residues; the sequence is RDEKRMKCDSTDKLE. Positions 51-102 constitute a bHLH domain; it reads THRVIANIRERQRTQALNQSFSTLRKIIPTLPSDKLSKIQTLRLAAMYIDFL.

Efficient DNA binding requires dimerization with another bHLH protein. Homodimer. In terms of tissue distribution, expression is seen at the point of medusa formation in the ectodermal and endodermal bud tissues, and in the entocodon which gives rise to all smooth and striated muscle cells. After the subumbrellar plate differentiates from the endoderm, strong expression is detected until the medusa detaches from the gonzoid. Expression is observed in the distal part of the medusa but diminishes in entocodon-derived muscles as the tissues differentiate, with expression disappearing completely after stage 8. In later stages expression is seen in the distal and proximal parts of the bud and depending on state of maturity, in the developing gonadal tissue.

The protein resides in the nucleus. Its function is as follows. Probable transcription factor, which may be responsible for the formation of myoepithelial cells in early muscle development in larva and the formation of non-muscle tissues in later bud stages and mesoderm-like structures in the medusa. The protein is Twist-related protein of Podocoryna carnea (Hydrozoan).